Here is a 1083-residue protein sequence, read N- to C-terminus: Alpha-mannosidase (1083 aa).

At S2 the chain carries N-acetylserine. Residues H298, D300, D411, and H626 each contribute to the Zn(2+) site. D411 serves as the catalytic Nucleophile.

It belongs to the glycosyl hydrolase 38 family. Composed of isoforms with three constituent polypeptides described as [(107 kDa)-n (73 kDa)-(6-n) (31 kDa)-(6-n)], where n is 0-6. The 73 kDa and the 31 kDa polypeptides may be proteolytic derivatives of the 107 kDa polypeptide in the vacuole. Oligomerizes in the cytoplasm and retains its oligomeric form during import into the vacuole. Requires Zn(2+) as cofactor. In terms of processing, the N-terminus is blocked.

Its subcellular location is the vacuole. The enzyme catalyses Hydrolysis of terminal, non-reducing alpha-D-mannose residues in alpha-D-mannosides.. Its function is as follows. Degrades free oligosaccharides in the vacuole. This Saccharomyces cerevisiae (strain ATCC 204508 / S288c) (Baker's yeast) protein is Alpha-mannosidase (AMS1).